The following is a 315-amino-acid chain: Methionyl-tRNA formyltransferase (315 aa).

Residue Ser-107–Pro-110 participates in (6S)-5,6,7,8-tetrahydrofolate binding.

The protein belongs to the Fmt family.

It catalyses the reaction L-methionyl-tRNA(fMet) + (6R)-10-formyltetrahydrofolate = N-formyl-L-methionyl-tRNA(fMet) + (6S)-5,6,7,8-tetrahydrofolate + H(+). Its function is as follows. Attaches a formyl group to the free amino group of methionyl-tRNA(fMet). The formyl group appears to play a dual role in the initiator identity of N-formylmethionyl-tRNA by promoting its recognition by IF2 and preventing the misappropriation of this tRNA by the elongation apparatus. This Borrelia garinii subsp. bavariensis (strain ATCC BAA-2496 / DSM 23469 / PBi) (Borreliella bavariensis) protein is Methionyl-tRNA formyltransferase.